Consider the following 602-residue polypeptide: Sulfite reductase [NADPH] hemoprotein beta-component (602 aa).

The segment at 1 to 23 (MDDTKTASPAPARAYETPPAERP) is disordered. [4Fe-4S] cluster contacts are provided by C458, C464, C503, and C507. C507 lines the siroheme pocket.

It belongs to the nitrite and sulfite reductase 4Fe-4S domain family. In terms of assembly, alpha(8)-beta(8). The alpha component is a flavoprotein, the beta component is a hemoprotein. Siroheme is required as a cofactor. Requires [4Fe-4S] cluster as cofactor.

It carries out the reaction hydrogen sulfide + 3 NADP(+) + 3 H2O = sulfite + 3 NADPH + 4 H(+). The protein operates within sulfur metabolism; hydrogen sulfide biosynthesis; hydrogen sulfide from sulfite (NADPH route): step 1/1. Functionally, component of the sulfite reductase complex that catalyzes the 6-electron reduction of sulfite to sulfide. This is one of several activities required for the biosynthesis of L-cysteine from sulfate. This Methylobacterium sp. (strain 4-46) protein is Sulfite reductase [NADPH] hemoprotein beta-component.